Consider the following 219-residue polypeptide: Ribosomal RNA large subunit methyltransferase E (219 aa).

5 residues coordinate S-adenosyl-L-methionine: glycine 60, tryptophan 62, aspartate 85, aspartate 101, and aspartate 126. The active-site Proton acceptor is lysine 166.

The protein belongs to the class I-like SAM-binding methyltransferase superfamily. RNA methyltransferase RlmE family.

It localises to the cytoplasm. The catalysed reaction is uridine(2552) in 23S rRNA + S-adenosyl-L-methionine = 2'-O-methyluridine(2552) in 23S rRNA + S-adenosyl-L-homocysteine + H(+). Its function is as follows. Specifically methylates the uridine in position 2552 of 23S rRNA at the 2'-O position of the ribose in the fully assembled 50S ribosomal subunit. This is Ribosomal RNA large subunit methyltransferase E from Bordetella avium (strain 197N).